The following is a 486-amino-acid chain: UDP-N-acetylmuramate--L-alanine ligase (486 aa).

129 to 135 provides a ligand contact to ATP; that stretch reads GTHGKTT.

This sequence belongs to the MurCDEF family.

The protein resides in the cytoplasm. The catalysed reaction is UDP-N-acetyl-alpha-D-muramate + L-alanine + ATP = UDP-N-acetyl-alpha-D-muramoyl-L-alanine + ADP + phosphate + H(+). The protein operates within cell wall biogenesis; peptidoglycan biosynthesis. Its function is as follows. Cell wall formation. In Vibrio vulnificus (strain CMCP6), this protein is UDP-N-acetylmuramate--L-alanine ligase.